The sequence spans 158 residues: Large ribosomal subunit protein uL18 (158 aa).

It belongs to the universal ribosomal protein uL18 family. In terms of assembly, part of the 50S ribosomal subunit. Contacts the 5S and 23S rRNAs.

Functionally, this is one of the proteins that bind and probably mediate the attachment of the 5S RNA into the large ribosomal subunit, where it forms part of the central protuberance. The chain is Large ribosomal subunit protein uL18 from Picrophilus torridus (strain ATCC 700027 / DSM 9790 / JCM 10055 / NBRC 100828 / KAW 2/3).